The sequence spans 151 residues: NADH-quinone oxidoreductase subunit I 2 (151 aa).

4Fe-4S ferredoxin-type domains lie at 49 to 82 (PRLN…VTSE) and 93 to 122 (VTFT…LTQD). Residues Cys62, Cys65, Cys68, Cys72, Cys102, Cys105, Cys108, and Cys112 each contribute to the [4Fe-4S] cluster site.

It belongs to the complex I 23 kDa subunit family. In terms of assembly, NDH-1 is composed of 14 different subunits. Subunits NuoA, H, J, K, L, M, N constitute the membrane sector of the complex. [4Fe-4S] cluster is required as a cofactor.

Its subcellular location is the cell inner membrane. The catalysed reaction is a quinone + NADH + 5 H(+)(in) = a quinol + NAD(+) + 4 H(+)(out). Functionally, NDH-1 shuttles electrons from NADH, via FMN and iron-sulfur (Fe-S) centers, to quinones in the respiratory chain. The immediate electron acceptor for the enzyme in this species is believed to be ubiquinone. Couples the redox reaction to proton translocation (for every two electrons transferred, four hydrogen ions are translocated across the cytoplasmic membrane), and thus conserves the redox energy in a proton gradient. In Solibacter usitatus (strain Ellin6076), this protein is NADH-quinone oxidoreductase subunit I 2.